The sequence spans 154 residues: Putative pre-16S rRNA nuclease (154 aa).

Belongs to the YqgF nuclease family.

The protein resides in the cytoplasm. Functionally, could be a nuclease involved in processing of the 5'-end of pre-16S rRNA. The chain is Putative pre-16S rRNA nuclease from Rickettsia akari (strain Hartford).